The following is a 422-amino-acid chain: Dipeptidase aclJ (422 aa).

The chain crosses the membrane as a helical span at residues 28-45; sequence LAYSVTLTLVALFFTFAL. Residues His-77 and Asp-79 each coordinate Zn(2+). Residue Asn-96 is glycosylated (N-linked (GlcNAc...) asparagine). A disulfide bridge connects residues Cys-128 and Cys-219. Glu-190 contributes to the Zn(2+) binding site. His-217 serves as a coordination point for substrate. A glycan (N-linked (GlcNAc...) asparagine) is linked at Asn-270. A disulfide bridge connects residues Cys-287 and Cys-319. The substrate site is built by Arg-291 and Asp-351.

This sequence belongs to the metallo-dependent hydrolases superfamily. Peptidase M19 family. Zn(2+) serves as cofactor.

Its subcellular location is the membrane. It catalyses the reaction an L-aminoacyl-L-amino acid + H2O = 2 an L-alpha-amino acid. It functions in the pathway mycotoxin biosynthesis. Its function is as follows. Dipeptidase; part of the gene cluster that mediates the biosynthesis of aspirochlorine (or antibiotic A30641), an unusual halogenated spiro compound with distinctive antifungal properties due to selective inhibition of protein biosynthesis, and which is also active against bacteria, viruses, and murine tumor cells. The non-ribosomal peptide synthetase (NRPS) aclP is responsible the formation of the diketopiperazine (DKP) core from the condensation of 2 phenylalanine residues. One Phe residue is tailored into chlorotyrosine by hydroxylation and chlorination, whereas the second Phe undergoes an unprecedented C-C bond cleavage to be converted into glycine. After formation of the DKP, sulfur is incorporated into the DKP by conjugation with glutathione by aclG, followed by its stepwise degradation to the thiol by aclI, aclJ and aclK, and the dithiol oxidation by aclT. In addition, oxygenases (aclB, aclC, aclL and aclO) and O-methyltransferases (aclM and aclU) act as tailoring enzymes to produce the intermediate dechloroaspirochlorine. Ultimately, chlorination of dechloroaspirochlorine by the halogenase aclH is the last step in the aspirochlorine pathway. The protein is Dipeptidase aclJ of Aspergillus oryzae (strain ATCC 42149 / RIB 40) (Yellow koji mold).